Reading from the N-terminus, the 166-residue chain is MSKSICSTGLRWLWVVVAVLIIDLGSKFLILQNFALGETVPLFPSLNLHYARNYGAAFSFLADSGGWQRWFFSGIAIGICVVLTVLMYRSKATQKLNNIAYALIIGGALGNLFDRLWHGFVVDMIDFYVGDWHFATFNLADSAICIGAALIVLEGFLPKPTAKEQA.

3 helical membrane-spanning segments follow: residues 12 to 32 (WLWV…LILQ), 70 to 90 (WFFS…MYRS), and 102 to 122 (ALII…GFVV). Catalysis depends on residues aspartate 123 and aspartate 141. The helical transmembrane segment at 137–157 (FNLADSAICIGAALIVLEGFL) threads the bilayer.

This sequence belongs to the peptidase A8 family.

Its subcellular location is the cell inner membrane. It carries out the reaction Release of signal peptides from bacterial membrane prolipoproteins. Hydrolyzes -Xaa-Yaa-Zaa-|-(S,diacylglyceryl)Cys-, in which Xaa is hydrophobic (preferably Leu), and Yaa (Ala or Ser) and Zaa (Gly or Ala) have small, neutral side chains.. The protein operates within protein modification; lipoprotein biosynthesis (signal peptide cleavage). Functionally, this protein specifically catalyzes the removal of signal peptides from prolipoproteins. The chain is Lipoprotein signal peptidase from Klebsiella pneumoniae (strain 342).